The following is a 358-amino-acid chain: MVNPQVIGYIGAAVASLFFGSNYVPVKNYPTGNGLAFTWVMSVGTLVVAYCAMFISKDYIFDPWGLLGGTLWSIGNFCVIPIVKTIGIGLGLLLWCCSSIITGYFTGKFGWFGIDKQKVSHPALNWIGFACIVAAVIFFFFIEPTIEEKDEHSYSSIVDDSEIGNNGIDNNGYNSINNNNNNGNNKRRSGAFNKQPKKSIFERMPPPYNTILGIVLSVFSGIMYGVNMVPMQLWKQSNVDASPLSFVFCHFSGIFLANTAVFIVYSIIVRPPQIFPQTIFPSFFSGLLWGIANVGLMVATQNLGYTIGFPMGSGGPMIVSSLWSVFYFREIQGVKNLLILLISFIFLGAGITILALSH.

The next 10 helical transmembrane spans lie at 6–26 (VIGYIGAAVASLFFGSNYVPV), 35–55 (LAFTWVMSVGTLVVAYCAMFI), 60–79 (IFDPWGLLGGTLWSIGNFCV), 86–108 (IGIGLGLLLWCCSSIITGYFTGK), 122–142 (PALNWIGFACIVAAVIFFFFI), 211–231 (ILGIVLSVFSGIMYGVNMVPM), 244–264 (LSFVFCHFSGIFLANTAVFIV), 279–299 (IFPSFFSGLLWGIANVGLMVA), 307–327 (IGFPMGSGGPMIVSSLWSVFY), and 337–357 (LLILLISFIFLGAGITILALS).

The protein belongs to the TMEM144 family.

The protein resides in the membrane. The polypeptide is Transmembrane protein 144 homolog B (tmem144B) (Dictyostelium discoideum (Social amoeba)).